The sequence spans 732 residues: Formin-homology and zinc finger domains protein 1 (732 aa).

4 stretches are compositionally biased toward low complexity: residues 1–12 (MMLASSAPTAPS), 19–45 (QPSA…SDAS), 121–137 (QQQQ…QSSS), and 240–251 (SSPKSPTSPTQP). A signal peptide spans 1–27 (MMLASSAPTAPSLLPPSSQPSAATTRA). Disordered regions lie at residues 1–45 (MMLA…SDAS), 121–141 (QQQQ…SDRK), and 232–267 (RGRP…RRNT). The span at 256 to 267 (SQASSLPSRRNT) shows a compositional bias: polar residues. One can recognise an FH2 domain in the interval 355-732 (PISLSSSIIP…DDHHINVSSP (378 aa)).

It belongs to the formin homology family. As to expression, transiently expressed in all mesoderm derived progenitor body wall muscle cells before they differentiate.

Its function is as follows. Acts redundantly with hlh-1 to promote body wall muscle cell and coelomocyte specification in postembryonic mesoderm progenitors, probably through suppression of sem-2. This Caenorhabditis elegans protein is Formin-homology and zinc finger domains protein 1.